A 127-amino-acid chain; its full sequence is Small ribosomal subunit protein uS13 (127 aa).

Positions 93–127 are disordered; the sequence is RQGLPVRGQRTRTNGRTRRGRRVTVAGKKKAPAKK. The segment covering 101-127 has biased composition (basic residues); sequence QRTRTNGRTRRGRRVTVAGKKKAPAKK.

It belongs to the universal ribosomal protein uS13 family. Part of the 30S ribosomal subunit. Forms a loose heterodimer with protein S19. Forms two bridges to the 50S subunit in the 70S ribosome.

Located at the top of the head of the 30S subunit, it contacts several helices of the 16S rRNA. In the 70S ribosome it contacts the 23S rRNA (bridge B1a) and protein L5 of the 50S subunit (bridge B1b), connecting the 2 subunits; these bridges are implicated in subunit movement. Contacts the tRNAs in the A and P-sites. The polypeptide is Small ribosomal subunit protein uS13 (Crocosphaera subtropica (strain ATCC 51142 / BH68) (Cyanothece sp. (strain ATCC 51142))).